A 287-amino-acid polypeptide reads, in one-letter code: Bifunctional protein FolD (287 aa).

NADP(+) contacts are provided by residues 166 to 168 (GAS) and Ile232.

Belongs to the tetrahydrofolate dehydrogenase/cyclohydrolase family. As to quaternary structure, homodimer.

It catalyses the reaction (6R)-5,10-methylene-5,6,7,8-tetrahydrofolate + NADP(+) = (6R)-5,10-methenyltetrahydrofolate + NADPH. The enzyme catalyses (6R)-5,10-methenyltetrahydrofolate + H2O = (6R)-10-formyltetrahydrofolate + H(+). Its pathway is one-carbon metabolism; tetrahydrofolate interconversion. Functionally, catalyzes the oxidation of 5,10-methylenetetrahydrofolate to 5,10-methenyltetrahydrofolate and then the hydrolysis of 5,10-methenyltetrahydrofolate to 10-formyltetrahydrofolate. In Pectobacterium atrosepticum (strain SCRI 1043 / ATCC BAA-672) (Erwinia carotovora subsp. atroseptica), this protein is Bifunctional protein FolD.